The following is a 603-amino-acid chain: NADH-ubiquinone oxidoreductase chain 5 (603 aa).

Transmembrane regions (helical) follow at residues Tyr4 to Val24, Val36 to Phe56, Met87 to Tyr107, Leu122 to Ile142, Ala171 to Leu191, Leu211 to Leu233, Thr241 to Ile261, Leu272 to Ala292, Ile301 to Asn320, Ala325 to Ile347, Ser370 to Tyr390, Ala406 to Tyr422, Leu488 to Thr508, and Met583 to Val603.

It belongs to the complex I subunit 5 family. In terms of assembly, core subunit of respiratory chain NADH dehydrogenase (Complex I) which is composed of 45 different subunits.

It is found in the mitochondrion inner membrane. It catalyses the reaction a ubiquinone + NADH + 5 H(+)(in) = a ubiquinol + NAD(+) + 4 H(+)(out). Its function is as follows. Core subunit of the mitochondrial membrane respiratory chain NADH dehydrogenase (Complex I) which catalyzes electron transfer from NADH through the respiratory chain, using ubiquinone as an electron acceptor. Essential for the catalytic activity and assembly of complex I. This is NADH-ubiquinone oxidoreductase chain 5 (MT-ND5) from Papio hamadryas (Hamadryas baboon).